A 298-amino-acid chain; its full sequence is Acetylglutamate kinase (298 aa).

Substrate is bound by residues 69-70 (GG), Arg91, and Asn196.

It belongs to the acetylglutamate kinase family. ArgB subfamily.

It is found in the cytoplasm. It carries out the reaction N-acetyl-L-glutamate + ATP = N-acetyl-L-glutamyl 5-phosphate + ADP. Its pathway is amino-acid biosynthesis; L-arginine biosynthesis; N(2)-acetyl-L-ornithine from L-glutamate: step 2/4. Functionally, catalyzes the ATP-dependent phosphorylation of N-acetyl-L-glutamate. In Nitrobacter hamburgensis (strain DSM 10229 / NCIMB 13809 / X14), this protein is Acetylglutamate kinase.